Consider the following 152-residue polypeptide: Arginine repressor (152 aa).

It belongs to the ArgR family.

Its subcellular location is the cytoplasm. It participates in amino-acid biosynthesis; L-arginine biosynthesis [regulation]. Its function is as follows. Regulates arginine biosynthesis genes. The protein is Arginine repressor of Lachnoclostridium phytofermentans (strain ATCC 700394 / DSM 18823 / ISDg) (Clostridium phytofermentans).